A 507-amino-acid polypeptide reads, in one-letter code: Probable aldehyde dehydrogenase (507 aa).

219–225 is a binding site for NAD(+); the sequence is GFGVEAG. Active-site residues include glutamate 263 and cysteine 302.

It belongs to the aldehyde dehydrogenase family.

It carries out the reaction an aldehyde + NAD(+) + H2O = a carboxylate + NADH + 2 H(+). The chain is Probable aldehyde dehydrogenase from Streptomyces coelicolor (strain ATCC BAA-471 / A3(2) / M145).